A 550-amino-acid polypeptide reads, in one-letter code: Warthog protein 8 (550 aa).

A signal peptide spans 1 to 19 (MNYLLLVSGLLSVWQPVFG).

The protein belongs to the hedgehog family. Post-translationally, the C-terminal domain displays an autoproteolysis activity.

The protein localises to the secreted. It localises to the cell surface. It is found in the cell membrane. Its subcellular location is the extracellular space. Its function is as follows. Intercellular signal essential for a variety of patterning events during development. This Caenorhabditis elegans protein is Warthog protein 8 (wrt-8).